We begin with the raw amino-acid sequence, 472 residues long: Protein PIN-LIKES 1 (472 aa).

The Lumenal portion of the chain corresponds to 1-93; the sequence is MSLTQSAKLH…FYSMRMRLLD (93 aa). A helical membrane pass occupies residues 94–114; that stretch reads LFITSSIPVAKILLITGIGFY. Residues 115–133 are Cytoplasmic-facing; the sequence is LALDQVNILNHDARKQLNN. The helical transmembrane segment at 134–154 threads the bilayer; the sequence is IVFYVFSPSLVASSLSETITY. The Lumenal portion of the chain corresponds to 155–161; sequence ESMVKMW. A helical membrane pass occupies residues 162 to 182; sequence FMPLNVLLTFIIGSFLGWIVI. The Cytoplasmic portion of the chain corresponds to 183-193; that stretch reads KITKPPSHLRG. A helical membrane pass occupies residues 194 to 214; sequence IIVGCCAAGNLGNMPLIIIPA. Over 215-231 the chain is Lumenal; it reads ICNEKGSPFGDPESCEK. A helical transmembrane segment spans residues 232 to 252; sequence FGLGYIALSMAIGAIYIWTYV. Residues 253–309 are Cytoplasmic-facing; that stretch reads YNLMRMLANPAGETAINSTSSTMPLISPKVEVAEQVGTWGKVKQRVCSVAEKINLRT. The helical transmembrane segment at 310–330 threads the bilayer; the sequence is IFAPSTIAALIALAVGLNPLL. The Lumenal portion of the chain corresponds to 331-347; the sequence is RKLLVGNTAPLRVIEDS. Residues 348 to 368 traverse the membrane as a helical segment; the sequence is VSLLGDGAIPVLTLIVGGNLL. The Cytoplasmic portion of the chain corresponds to 369 to 379; it reads NGLRGSGINKS. The helical transmembrane segment at 380–400 threads the bilayer; it reads VIMGVVVVRYLLLPILGVFIV. Topologically, residues 401 to 413 are lumenal; sequence RGAHYLGLVTSEP. The chain crosses the membrane as a helical span at residues 414–434; that stretch reads LYQFVLLLQYVVPPAMNLGTI. Over 435 to 446 the chain is Cytoplasmic; it reads TQLFGSGESECS. A helical transmembrane segment spans residues 447–467; it reads VILFWSYALASVSLTVWPTFF. At 468 to 472 the chain is on the lumenal side; the sequence is MWLVA.

Belongs to the auxin efflux carrier (TC 2.A.69.2) family. Expressed in flowers.

It localises to the endoplasmic reticulum membrane. In terms of biological role, involved in cellular auxin homeostasis by regulating auxin metabolism. Regulates intracellular auxin accumulation at the endoplasmic reticulum and thus auxin availability for nuclear auxin signaling. This chain is Protein PIN-LIKES 1, found in Arabidopsis thaliana (Mouse-ear cress).